Consider the following 89-residue polypeptide: MLGGLGKLAAEGLAHRTEKATEGAVHAVEEVVSEVVGHAKEVGEKAINDALKKAQESGDRVVKEVTEKVTHTITDAVTHAAEGLGRLGQ.

Belongs to the FAM25 family.

This is Protein FAM25A from Mus musculus (Mouse).